The sequence spans 659 residues: Zinc finger protein 304 (659 aa).

The 75-residue stretch at 14–88 (VTFEDVFVYF…TAESGLFQKA (75 aa)) folds into the KRAB domain. 16 C2H2-type zinc fingers span residues 89–111 (HPCE…QGSH), 115–139 (KLCT…QKQH), 251–273 (FRCL…RKIH), 279–301 (HVCK…QKFH), 307–329 (YTCS…QRVH), 335–357 (YDCS…QRIH), 363–385 (YKCN…QRFH), 391–413 (YECS…WRIH), 419–441 (YECI…RRVH), 447–469 (YVCS…QIIH), 475–497 (YECS…QKIH), 503–525 (YECG…QRIH), 531–553 (YECN…QRVH), 559–581 (YVCS…KKVH), 587–609 (YECS…QRVH), and 615–637 (YVCS…QKAH).

It belongs to the krueppel C2H2-type zinc-finger protein family. Probably part of a corepressor complex containing ZNF304, TRIM28, SETDB1 and DNMT1; leading to promoter hypermethylation and transcriptional silencing. Probably associates with Polycomb group (PcG) complexes; leading to trimethylation of 'Lys-27' of histone H3 (H3K27me3). Interacts with USP28. Deubiquitinated by USP28; the deubiquitination leads to the stabilization of ZNF304 from proteolytic degradation. Expressed in undifferentiated embryonic stem cells (ESCs). Expressed strongly in colorectal cancers cells (CRCs). Expressed strongly in ovarian carcinoma (OC) tumor cell lines compared to non-transformed ovarian epithelial cells (at protein level). Expressed in lymphoid tissues, thyroid, adrenal gland, prostate, pancreas and skeletal muscles.

Its subcellular location is the nucleus. In terms of biological role, acts as a transcriptional regulator and plays a role in gene silencing. Probably forms a corepressor complex required for activated KRAS-mediated promoter hypermethylation and transcriptional silencing of several tumor suppressor genes (TSGs) or other tumor-related genes in colorectal cancer (CRC) cells. Also required to maintain a transcriptionally repressive state of genes in undifferentiated embryonic stem cells (ESCs) by inducing trimethylation of 'Lys-27' of histone H3 (H3K27me3) in a Polycomb group (PcG) complexes-dependent manner. Associates at promoter regions of TSGs and mediates the recruitment of the corepressor complex containing the scaffolding protein TRIM28, methyltransferase DNMT1 and histone methyltransferase SETDB1 and/or the PcG complexes at those sites. Transcription factor involved in the metastatic cascade process by inducing cell migration and proliferation and gain resistance to anoikis of ovarian carcinoma (OC) cells via integrin-mediated signaling pathways. Associates with the ITGB1 promoter and positively regulates beta-1 integrin transcription expression. Promotes angiogenesis. Promotes tumor growth. The polypeptide is Zinc finger protein 304 (Homo sapiens (Human)).